The primary structure comprises 227 residues: Cytochrome c oxidase subunit 2 (227 aa).

At M1 to S14 the chain is on the mitochondrial intermembrane side. Residues P15–M45 traverse the membrane as a helical segment. Residues L46–Q59 lie on the Mitochondrial matrix side of the membrane. The chain crosses the membrane as a helical span at residues E60–M87. Residues D88–L227 lie on the Mitochondrial intermembrane side of the membrane. Residues H161, C196, E198, C200, H204, and M207 each coordinate Cu cation. E198 contributes to the Mg(2+) binding site.

This sequence belongs to the cytochrome c oxidase subunit 2 family. Component of the cytochrome c oxidase (complex IV, CIV), a multisubunit enzyme composed of 14 subunits. The complex is composed of a catalytic core of 3 subunits MT-CO1, MT-CO2 and MT-CO3, encoded in the mitochondrial DNA, and 11 supernumerary subunits COX4I, COX5A, COX5B, COX6A, COX6B, COX6C, COX7A, COX7B, COX7C, COX8 and NDUFA4, which are encoded in the nuclear genome. The complex exists as a monomer or a dimer and forms supercomplexes (SCs) in the inner mitochondrial membrane with NADH-ubiquinone oxidoreductase (complex I, CI) and ubiquinol-cytochrome c oxidoreductase (cytochrome b-c1 complex, complex III, CIII), resulting in different assemblies (supercomplex SCI(1)III(2)IV(1) and megacomplex MCI(2)III(2)IV(2)). Found in a complex with TMEM177, COA6, COX18, COX20, SCO1 and SCO2. Interacts with TMEM177 in a COX20-dependent manner. Interacts with COX20. Interacts with COX16. Cu cation is required as a cofactor.

It is found in the mitochondrion inner membrane. The enzyme catalyses 4 Fe(II)-[cytochrome c] + O2 + 8 H(+)(in) = 4 Fe(III)-[cytochrome c] + 2 H2O + 4 H(+)(out). Functionally, component of the cytochrome c oxidase, the last enzyme in the mitochondrial electron transport chain which drives oxidative phosphorylation. The respiratory chain contains 3 multisubunit complexes succinate dehydrogenase (complex II, CII), ubiquinol-cytochrome c oxidoreductase (cytochrome b-c1 complex, complex III, CIII) and cytochrome c oxidase (complex IV, CIV), that cooperate to transfer electrons derived from NADH and succinate to molecular oxygen, creating an electrochemical gradient over the inner membrane that drives transmembrane transport and the ATP synthase. Cytochrome c oxidase is the component of the respiratory chain that catalyzes the reduction of oxygen to water. Electrons originating from reduced cytochrome c in the intermembrane space (IMS) are transferred via the dinuclear copper A center (CU(A)) of subunit 2 and heme A of subunit 1 to the active site in subunit 1, a binuclear center (BNC) formed by heme A3 and copper B (CU(B)). The BNC reduces molecular oxygen to 2 water molecules using 4 electrons from cytochrome c in the IMS and 4 protons from the mitochondrial matrix. The sequence is that of Cytochrome c oxidase subunit 2 (MT-CO2) from Cheirogaleus medius (Fat-tailed dwarf lemur).